The chain runs to 488 residues: Glutamyl-tRNA(Gln) amidotransferase subunit A (488 aa).

Catalysis depends on charge relay system residues K77 and S152. The Acyl-ester intermediate role is filled by S176.

This sequence belongs to the amidase family. GatA subfamily. In terms of assembly, heterotrimer of A, B and C subunits.

It carries out the reaction L-glutamyl-tRNA(Gln) + L-glutamine + ATP + H2O = L-glutaminyl-tRNA(Gln) + L-glutamate + ADP + phosphate + H(+). Its function is as follows. Allows the formation of correctly charged Gln-tRNA(Gln) through the transamidation of misacylated Glu-tRNA(Gln) in organisms which lack glutaminyl-tRNA synthetase. The reaction takes place in the presence of glutamine and ATP through an activated gamma-phospho-Glu-tRNA(Gln). The chain is Glutamyl-tRNA(Gln) amidotransferase subunit A from Streptococcus agalactiae serotype Ia (strain ATCC 27591 / A909 / CDC SS700).